Consider the following 78-residue polypeptide: Large ribosomal subunit protein bL28 (78 aa).

Positions 1-22 (MAKVCQVTGKRPVTGHNVSHAK) are disordered.

It belongs to the bacterial ribosomal protein bL28 family.

This Teredinibacter turnerae (strain ATCC 39867 / T7901) protein is Large ribosomal subunit protein bL28.